The sequence spans 757 residues: Subtilisin-like protease SBT1.7 (757 aa).

A signal peptide spans 1–24 (MSSSFLSSTAFFLLLCLGFCHVSS). Residues 25–106 (SSSDQGTYIV…VLPEHRYELH (82 aa)) constitute a propeptide that is removed on maturation. Positions 31-106 (TYIVHMAKSQ…VLPEHRYELH (76 aa)) constitute an Inhibitor I9 domain. The Peptidase S8 domain occupies 102–610 (RYELHTTRTP…AGHVSPTTAT (509 aa)). Residue Asp139 is the Charge relay system of the active site. A glycan (N-linked (GlcNAc...) asparagine) is linked at Asn170. Positions 196–219 (PIDESKESRSPRDDDGHGTHTSST) are disordered. A compositionally biased stretch (basic and acidic residues) spans 198–213 (DESKESRSPRDDDGHG). His212 acts as the Charge relay system in catalysis. N-linked (GlcNAc...) asparagine glycosylation is found at Asn352, Asn376, and Asn379. Catalysis depends on Ser542, which acts as the Charge relay system. Residues Asn631 and Asn644 are each glycosylated (N-linked (GlcNAc...) asparagine).

The protein belongs to the peptidase S8 family. As to expression, expressed in immature siliques and at lower levels in stems and flowers. Widely expressed at low levels.

It localises to the secreted. Its subcellular location is the cell wall. Its activity is regulated as follows. Activated by calcium. Inhibited by the serine protease inhibitors 4-(2-aminoethyl)benzenesulphonyl fluoride (AEBSF), PMSF, di-isopropyl phosphofluoridate (DFP) and soybean trypsin inhibitor (SBTI). Not inhibited by benzamidine or iodoacetamide. Leupeptin and pepstatin A have a minor inhibitory action. In terms of biological role, serine protease. Has a substrate preference for the hydrophobic residues Phe and Ala and the basic residue Asp in the P1 position, and for Asp, Leu or Ala in the P1' position. Essential for mucilage release from seed coats. Triggers the accumulation and/or activation of cell wall modifying enzymes necessary either for the loosening of the outer primary cell wall, or to facilitate swelling of the mucilage. The sequence is that of Subtilisin-like protease SBT1.7 from Arabidopsis thaliana (Mouse-ear cress).